A 142-amino-acid chain; its full sequence is ATP synthase epsilon chain (142 aa).

It belongs to the ATPase epsilon chain family. F-type ATPases have 2 components, CF(1) - the catalytic core - and CF(0) - the membrane proton channel. CF(1) has five subunits: alpha(3), beta(3), gamma(1), delta(1), epsilon(1). CF(0) has three main subunits: a, b and c.

Its subcellular location is the cell inner membrane. In terms of biological role, produces ATP from ADP in the presence of a proton gradient across the membrane. The chain is ATP synthase epsilon chain from Koribacter versatilis (strain Ellin345).